The following is a 122-amino-acid chain: Large ribosomal subunit protein uL14 (122 aa).

It belongs to the universal ribosomal protein uL14 family. In terms of assembly, part of the 50S ribosomal subunit. Forms a cluster with proteins L3 and L19. In the 70S ribosome, L14 and L19 interact and together make contacts with the 16S rRNA in bridges B5 and B8.

Its function is as follows. Binds to 23S rRNA. Forms part of two intersubunit bridges in the 70S ribosome. This is Large ribosomal subunit protein uL14 from Anaeromyxobacter sp. (strain Fw109-5).